Consider the following 86-residue polypeptide: Putative membrane protein insertion efficiency factor (86 aa).

This sequence belongs to the UPF0161 family.

Its subcellular location is the cell inner membrane. Functionally, could be involved in insertion of integral membrane proteins into the membrane. This is Putative membrane protein insertion efficiency factor from Oleidesulfovibrio alaskensis (strain ATCC BAA-1058 / DSM 17464 / G20) (Desulfovibrio alaskensis).